A 639-amino-acid polypeptide reads, in one-letter code: uncharacterized protein (639 aa).

A signal peptide spans M1–A16. 2 disordered regions span residues R80–L128 and Q432–T488. Polar residues-rich tracts occupy residues T108–P122 and Q432–P446. Positions H465–H480 are enriched in basic and acidic residues.

This is an uncharacterized protein from Human cytomegalovirus (strain Merlin) (HHV-5).